The sequence spans 153 residues: Large ribosomal subunit protein uL15 (153 aa).

The interval 1–48 is disordered; sequence MRLNELSPAPGSKKDRKRVGRGDAGRGNYSGRGMKGQKARSGGATRPG.

It belongs to the universal ribosomal protein uL15 family. Part of the 50S ribosomal subunit.

Binds to the 23S rRNA. This is Large ribosomal subunit protein uL15 from Dehalococcoides mccartyi (strain ATCC BAA-2266 / KCTC 15142 / 195) (Dehalococcoides ethenogenes (strain 195)).